Consider the following 199-residue polypeptide: Probable GTP-binding protein EngB (199 aa).

One can recognise an EngB-type G domain in the interval 28-199 (DLPEIALAGR…DSWDAILEQV (172 aa)). Residues 36–43 (GRSNVGKS), 63–67 (GKTQL), 81–84 (DVPG), 148–151 (TKAD), and 180–182 (FSS) each bind GTP. Positions 43 and 65 each coordinate Mg(2+).

It belongs to the TRAFAC class TrmE-Era-EngA-EngB-Septin-like GTPase superfamily. EngB GTPase family. It depends on Mg(2+) as a cofactor.

In terms of biological role, necessary for normal cell division and for the maintenance of normal septation. The polypeptide is Probable GTP-binding protein EngB (Streptococcus pyogenes serotype M3 (strain SSI-1)).